The primary structure comprises 1210 residues: ATP-dependent helicase/nuclease subunit A (1210 aa).

The region spanning 27 to 483 (QKRTAQQIEA…ILLKENFRSQ (457 aa)) is the UvrD-like helicase ATP-binding domain. 48 to 55 (ASAGSGKT) contacts ATP. One can recognise a UvrD-like helicase C-terminal domain in the interval 512–798 (QLIAGSHAQT…NLMTIHKSKG (287 aa)).

The protein belongs to the helicase family. AddA subfamily. In terms of assembly, heterodimer of AddA and AddB/RexB. It depends on Mg(2+) as a cofactor.

It catalyses the reaction Couples ATP hydrolysis with the unwinding of duplex DNA by translocating in the 3'-5' direction.. The catalysed reaction is ATP + H2O = ADP + phosphate + H(+). In terms of biological role, the heterodimer acts as both an ATP-dependent DNA helicase and an ATP-dependent, dual-direction single-stranded exonuclease. Recognizes the chi site generating a DNA molecule suitable for the initiation of homologous recombination. The AddA nuclease domain is required for chi fragment generation; this subunit has the helicase and 3' -&gt; 5' nuclease activities. This Streptococcus pyogenes serotype M5 (strain Manfredo) protein is ATP-dependent helicase/nuclease subunit A.